The following is a 151-amino-acid chain: Methylglyoxal synthase (151 aa).

Positions 6–151 (RTMPAHKHVA…DYEAYLAERM (146 aa)) constitute an MGS-like domain. Residues His-19, Lys-23, 45 to 48 (TGTT), and 65 to 66 (SG) contribute to the substrate site. Asp-71 (proton donor/acceptor) is an active-site residue. Position 98 (His-98) interacts with substrate.

Belongs to the methylglyoxal synthase family.

It catalyses the reaction dihydroxyacetone phosphate = methylglyoxal + phosphate. Functionally, catalyzes the formation of methylglyoxal from dihydroxyacetone phosphate. The polypeptide is Methylglyoxal synthase (Vibrio parahaemolyticus serotype O3:K6 (strain RIMD 2210633)).